The sequence spans 312 residues: Dipeptide transport ATP-binding protein DppF (312 aa).

The ABC transporter domain occupies 10–255 (IKNLDLTFNK…PIHPYTKSLL (246 aa)). 45–52 (GESGSGKT) lines the ATP pocket.

This sequence belongs to the ABC transporter superfamily. As to quaternary structure, the complex is composed of two ATP-binding proteins (DppD and DppF), two transmembrane proteins (DppB and DppC) and a solute-binding protein (DppA).

It is found in the cell membrane. The catalysed reaction is a dipeptide(out) + ATP + H2O = a dipeptide(in) + ADP + phosphate + H(+). Part of the ABC transporter DppABCDF involved in dipeptide transport. Responsible for energy coupling to the transport system. This Lactococcus lactis subsp. cremoris (strain MG1363) protein is Dipeptide transport ATP-binding protein DppF.